A 281-amino-acid chain; its full sequence is MEMO1 family protein PAE0818 (281 aa).

This sequence belongs to the MEMO1 family.

The chain is MEMO1 family protein PAE0818 from Pyrobaculum aerophilum (strain ATCC 51768 / DSM 7523 / JCM 9630 / CIP 104966 / NBRC 100827 / IM2).